Here is a 596-residue protein sequence, read N- to C-terminus: Thioredoxin reductase 1, mitochondrial (596 aa).

The tract at residues 59-87 is disordered; the sequence is LTGQRGSRDSTGATGGNAPAGSGAGAPPP. Residues 68 to 79 are compositionally biased toward low complexity; the sequence is STGATGGNAPAG. FAD-binding positions include 120–126, 143–147, 159–170, 233–235, 262–266, Ser-282, Phe-286, and Tyr-302; these read IGGGSAG, LDFVK, GGTCVNVGCIPK, GLG, and AVGGR. Cys-162 and Cys-167 form a disulfide bridge. NADP(+) is bound by residues 322–328 and Pro-355; that span reads VRSIVLR. FAD-binding positions include 392–399, 429–432, 438–443, and Phe-472; these read RKGLVDDL, VGDI, and ELTPVA. Residue His-569 is the Proton acceptor of the active site. Pro-570 lines the FAD pocket. A disulfide bond links Cys-594 and Cys-595.

Belongs to the class-I pyridine nucleotide-disulfide oxidoreductase family. Homodimer. Requires FAD as cofactor. During embryogenesis, expression is seen in germ cell progenitors, developing midgut, hindgut and proventriculus.

It localises to the mitochondrion. The protein resides in the cytoplasm. The catalysed reaction is [thioredoxin]-dithiol + NADP(+) = [thioredoxin]-disulfide + NADPH + H(+). Functionally, thioredoxin system is a major player in glutathione metabolism, due to the demonstrated absence of a glutathione reductase. Functionally interacts with the Sod/Cat reactive oxidation species (ROS) defense system and thereby has a role in preadult development and life span. Lack of a glutathione reductase suggests antioxidant defense in Drosophila, and probably in related insects, differs fundamentally from that in other organisms. The chain is Thioredoxin reductase 1, mitochondrial from Drosophila melanogaster (Fruit fly).